Consider the following 307-residue polypeptide: MKLTLNRILFSGLALSILFTLTGCVGRDAHGNPKGMIWEFLGKPMSYFIDYFANNAGLGYGLAIIIVTIIVRTLILPLGLYQSWKASYQSEKMTFLKPVFEPINKRIKQASSQEEKMAAQTELMAAQRAHGINPLGGIGCLPLLIQMPFFSAMYFAAQYTKGVSTSTFMGIDLGSRSLVLTAIIAALYFFQSWLSMMAVSEEQREQMKTMMYTMPIMMIFMSFSLPAGVGLYWLVGGFFSIIQQLITTYLLKPRLHKQIKEEYAKTPPKAYQSTSSRKDVTPSQNMEQANLPKKIKSNRNAGKQRKR.

Residues Met1–Gly23 form the signal peptide. Cys24 carries N-palmitoyl cysteine lipidation. Cys24 carries S-diacylglycerol cysteine lipidation. The next 5 membrane-spanning stretches (helical) occupy residues Leu58–Leu78, Leu135–Phe155, Val179–Val199, Thr209–Leu225, and Leu231–Leu251. The tract at residues Tyr263–Arg307 is disordered. Polar residues predominate over residues Tyr271–Gln288. Basic residues predominate over residues Lys293–Arg307.

This sequence belongs to the OXA1/ALB3/YidC family. Type 2 subfamily.

The protein localises to the cell membrane. Functionally, required for the insertion and/or proper folding and/or complex formation of integral membrane proteins into the membrane. Involved in integration of membrane proteins that insert both dependently and independently of the Sec translocase complex, as well as at least some lipoproteins. This is Membrane protein insertase YidC 2 from Streptococcus pyogenes serotype M18 (strain MGAS8232).